The sequence spans 201 residues: Small ribosomal subunit protein uS4c (201 aa).

One can recognise an S4 RNA-binding domain in the interval 89-152 (MRLDNILFRL…NSRTLVQNLL (64 aa)).

The protein belongs to the universal ribosomal protein uS4 family. In terms of assembly, part of the 30S ribosomal subunit. Contacts protein S5. The interaction surface between S4 and S5 is involved in control of translational fidelity.

Its subcellular location is the plastid. The protein resides in the chloroplast. Its function is as follows. One of the primary rRNA binding proteins, it binds directly to 16S rRNA where it nucleates assembly of the body of the 30S subunit. With S5 and S12 plays an important role in translational accuracy. In Arabidopsis thaliana (Mouse-ear cress), this protein is Small ribosomal subunit protein uS4c (rps4).